We begin with the raw amino-acid sequence, 153 residues long: Deoxyuridine 5'-triphosphate nucleotidohydrolase (153 aa).

Substrate-binding positions include 71 to 73 (RSG), Asn84, 88 to 90 (LID), and Met98.

Belongs to the dUTPase family. Mg(2+) is required as a cofactor.

The enzyme catalyses dUTP + H2O = dUMP + diphosphate + H(+). It participates in pyrimidine metabolism; dUMP biosynthesis; dUMP from dCTP (dUTP route): step 2/2. Functionally, this enzyme is involved in nucleotide metabolism: it produces dUMP, the immediate precursor of thymidine nucleotides and it decreases the intracellular concentration of dUTP so that uracil cannot be incorporated into DNA. The sequence is that of Deoxyuridine 5'-triphosphate nucleotidohydrolase from Wigglesworthia glossinidia brevipalpis.